We begin with the raw amino-acid sequence, 192 residues long: Beta-glucosidase (192 aa).

It belongs to the glycosyl hydrolase 3 family.

It carries out the reaction Hydrolysis of terminal, non-reducing beta-D-glucosyl residues with release of beta-D-glucose.. It functions in the pathway glycan metabolism; cellulose degradation. This Schizophyllum commune (Split gill fungus) protein is Beta-glucosidase.